The sequence spans 299 residues: Lipoyl synthase 2 (299 aa).

7 residues coordinate [4Fe-4S] cluster: Cys45, Cys50, Cys56, Cys71, Cys75, Cys78, and Ser295. The region spanning 57 to 284 is the Radical SAM core domain; it reads YASGTATFLL…KSFCSKLGFK (228 aa).

This sequence belongs to the radical SAM superfamily. Lipoyl synthase family. It depends on [4Fe-4S] cluster as a cofactor.

Its subcellular location is the cytoplasm. It catalyses the reaction [[Fe-S] cluster scaffold protein carrying a second [4Fe-4S](2+) cluster] + N(6)-octanoyl-L-lysyl-[protein] + 2 oxidized [2Fe-2S]-[ferredoxin] + 2 S-adenosyl-L-methionine + 4 H(+) = [[Fe-S] cluster scaffold protein] + N(6)-[(R)-dihydrolipoyl]-L-lysyl-[protein] + 4 Fe(3+) + 2 hydrogen sulfide + 2 5'-deoxyadenosine + 2 L-methionine + 2 reduced [2Fe-2S]-[ferredoxin]. Its pathway is protein modification; protein lipoylation via endogenous pathway; protein N(6)-(lipoyl)lysine from octanoyl-[acyl-carrier-protein]: step 2/2. In terms of biological role, catalyzes the radical-mediated insertion of two sulfur atoms into the C-6 and C-8 positions of the octanoyl moiety bound to the lipoyl domains of lipoate-dependent enzymes, thereby converting the octanoylated domains into lipoylated derivatives. The protein is Lipoyl synthase 2 of Prochlorococcus marinus subsp. pastoris (strain CCMP1986 / NIES-2087 / MED4).